The sequence spans 60 residues: Cytotoxin 1 (60 aa).

4 disulfide bridges follow: cysteine 3/cysteine 21, cysteine 14/cysteine 38, cysteine 42/cysteine 53, and cysteine 54/cysteine 59.

It belongs to the three-finger toxin family. Short-chain subfamily. Type IA cytotoxin sub-subfamily. Monomer in solution; Homodimer and oligomer in the presence of negatively charged lipids forming a pore with a size ranging between 20 and 30 angstroms. As to expression, expressed by the venom gland.

The protein resides in the secreted. The protein localises to the target cell membrane. Its function is as follows. Basic protein that binds to cell membrane and depolarizes cardiomyocytes. This cytotoxin also possesses lytic activity on many other cells, including red blood cells. Interaction with sulfatides in the cell membrane induces pore formation and cell internalization and is responsible for cytotoxicity in cardiomyocytes. It targets the mitochondrial membrane and induces mitochondrial swelling and fragmentation. Inhibits protein kinases C. It binds to the integrin alpha-V/beta-3 with a moderate affinity. This Naja pallida (Red spitting cobra) protein is Cytotoxin 1.